Reading from the N-terminus, the 699-residue chain is Cyclic AMP-dependent transcription factor ATF-6 beta (699 aa).

Residue alanine 2 is modified to N-acetylalanine. At alanine 2–lysine 393 the chain is on the cytoplasmic side. 3 disordered regions span residues serine 59–glycine 114, valine 218–valine 246, and glutamate 290–serine 313. Positions proline 68–isoleucine 78 are enriched in pro residues. Residues serine 86 to proline 109 show a composition bias toward low complexity. A bZIP domain is found at leucine 322–leucine 385. Residues lysine 324–lysine 344 form a basic motif region. A leucine-zipper region spans residues leucine 347–leucine 354. Residues valine 394 to serine 414 traverse the membrane as a helical; Signal-anchor for type II membrane protein segment. Topologically, residues glutamate 415–proline 699 are lumenal. Residues proline 417 to leucine 474 form a disordered region. Positions proline 458–glycine 467 are enriched in polar residues. N-linked (GlcNAc...) asparagine glycosylation is found at asparagine 473 and asparagine 502. Positions arginine 519–histidine 529 are enriched in basic residues. Residues arginine 519–glycine 563 are disordered. Pro residues predominate over residues proline 545 to proline 556. Residues asparagine 607, asparagine 624, and asparagine 673 are each glycosylated (N-linked (GlcNAc...) asparagine). Residues serine 657–proline 699 are disordered. Low complexity predominate over residues proline 680–proline 693.

It belongs to the bZIP family. ATF subfamily. Homodimer and heterodimer with ATF6-alpha. The dimer interacts with the nuclear transcription factor Y (NF-Y) trimer through direct binding to NF-Y subunit C (NF-YC). N-glycosylated. Post-translationally, during unfolded protein response, a fragment of approximately 60 kDa containing the cytoplasmic transcription factor domain is released by proteolysis. The cleavage is probably performed sequentially by site-1 (MBTPS1, S1P) and site-2 (MBTPS2, S2P) proteases.

The protein resides in the endoplasmic reticulum membrane. Its subcellular location is the nucleus. Functionally, precursor of the transcription factor form (Processed cyclic AMP-dependent transcription factor ATF-6 beta), which is embedded in the endoplasmic reticulum membrane. Endoplasmic reticulum stress promotes processing of this form, releasing the transcription factor form that translocates into the nucleus, where it activates transcription of genes involved in the unfolded protein response (UPR). Its function is as follows. Transcription factor that acts in the unfolded protein response (UPR) pathway by activating UPR target genes induced during ER stress. Binds DNA on the 5'-CCAC[GA]-3' half of the ER stress response element (ERSE) (5'-CCAATN(9)CCAC[GA]-3') when NF-Y is bound to ERSE. This is Cyclic AMP-dependent transcription factor ATF-6 beta (Atf6b) from Mus musculus (Mouse).